We begin with the raw amino-acid sequence, 551 residues long: MPSARLQQQFIRLWQCCEGKSQDTTLNELAALLSCSRRHMRTLLNTMQDRGWLTWEAEVGRGKRSRLTFLYTGLALQQQRAEDLLEQDRIDQLVQLVGDKATVRQMLVSHLGRSFRQGRHILRVLYYRPLRNLLPGSALRRSETHIARQIFSSLTRINEENGELEADIAHHWQQISPLHWRFFLRPGVHFHHGRELEMDDVIASLKRINTLPLYSHIADIVSPTPWTLDIHLTQPDRWLPLLLGQVPAMILPREWETLSNFASHPIGTGPYAVIRNTTNQLKIQAFDDFFGYRALIDEVNVWVLPEIADEPAGGLMLKGPQGEEKEIESRLEEGCYYLLFDSRTHRGANQQVRDWVSYVLSPTNLVYFAEEQYQQLWFPAYGLLPRWHHARTIKSEKPAGLESLTLTFYQDHSEHRVIAGIMQQILASHQVTLEIKEISYDQWHEGEIESDIWLNSANFTLPLDFSLFAHLCEVPLLQHCIPIDWQADAARWRNGEMNLANWCQQLVASKAMVPLIHHWLIIQGQRSMRGLRMNTLGWFDFKSAWFAPPDP.

One can recognise an HTH marR-type domain in the interval 1-116; the sequence is MPSARLQQQF…LVSHLGRSFR (116 aa). Positions 26-49 form a DNA-binding region, H-T-H motif; the sequence is LNELAALLSCSRRHMRTLLNTMQD. Residues 163 to 492 are solute-binding; that stretch reads ELEADIAHHW…IDWQADAARW (330 aa).

In terms of biological role, activates the small RNA gene sgrS under glucose-phosphate stress conditions as well as yfdZ. Represses its own transcription under both stress and non-stress conditions. Might act as a sensor of the intracellular accumulation of phosphoglucose by binding these molecules in its C-terminal solute-binding domain. This Shigella sonnei (strain Ss046) protein is HTH-type transcriptional regulator SgrR.